Consider the following 221-residue polypeptide: GTP cyclohydrolase-2 (221 aa).

63 to 67 (RLHSE) lines the GTP pocket. Positions 68, 79, and 81 each coordinate Zn(2+). Residues Gln-84, 107–109 (EGR), and Thr-129 contribute to the GTP site. The Proton acceptor role is filled by Asp-141. Arg-143 acts as the Nucleophile in catalysis. Residues Ser-164 and Lys-169 each coordinate GTP.

The protein belongs to the GTP cyclohydrolase II family. Zn(2+) serves as cofactor.

The catalysed reaction is GTP + 4 H2O = 2,5-diamino-6-hydroxy-4-(5-phosphoribosylamino)-pyrimidine + formate + 2 phosphate + 3 H(+). It participates in cofactor biosynthesis; riboflavin biosynthesis; 5-amino-6-(D-ribitylamino)uracil from GTP: step 1/4. Catalyzes the conversion of GTP to 2,5-diamino-6-ribosylamino-4(3H)-pyrimidinone 5'-phosphate (DARP), formate and pyrophosphate. The polypeptide is GTP cyclohydrolase-2 (Streptomyces coelicolor (strain ATCC BAA-471 / A3(2) / M145)).